The following is an 85-amino-acid chain: Translation initiation factor IF-1 (85 aa).

An S1-like domain is found at 1–72 (MAKEELIEMH…SKGRITFRHI (72 aa)).

It belongs to the IF-1 family. As to quaternary structure, component of the 30S ribosomal translation pre-initiation complex which assembles on the 30S ribosome in the order IF-2 and IF-3, IF-1 and N-formylmethionyl-tRNA(fMet); mRNA recruitment can occur at any time during PIC assembly.

The protein localises to the cytoplasm. Functionally, one of the essential components for the initiation of protein synthesis. Stabilizes the binding of IF-2 and IF-3 on the 30S subunit to which N-formylmethionyl-tRNA(fMet) subsequently binds. Helps modulate mRNA selection, yielding the 30S pre-initiation complex (PIC). Upon addition of the 50S ribosomal subunit IF-1, IF-2 and IF-3 are released leaving the mature 70S translation initiation complex. The polypeptide is Translation initiation factor IF-1 (Polaromonas naphthalenivorans (strain CJ2)).